The sequence spans 119 residues: Large ribosomal subunit protein uL24 (119 aa).

The protein belongs to the universal ribosomal protein uL24 family. As to quaternary structure, part of the 50S ribosomal subunit.

Its function is as follows. One of two assembly initiator proteins, it binds directly to the 5'-end of the 23S rRNA, where it nucleates assembly of the 50S subunit. Functionally, located at the polypeptide exit tunnel on the outside of the subunit. The polypeptide is Large ribosomal subunit protein uL24 (Methanosarcina acetivorans (strain ATCC 35395 / DSM 2834 / JCM 12185 / C2A)).